The sequence spans 239 residues: MLVIPAIDLQSGRCVRLKQGRFDQVTQFSVFPIERALHFAKLGAKRLHVVDLDGARSGKMQQLELICSMQKTGIAIQAGGGIRSIEQALECSNAGISQLVIGSLAITNPDLTIQIIEKIKPENIVLALDVRVDTKVPLLAINGWQNNSTSSLWEVVSYYENHGIKHILCTDIACDGMMNGPNFDLYQQAVEYFPQIAWQASGGIRHMQDITTLGSLGISAVILGLMLYQDNVNFEELLC.

Asp8 functions as the Proton acceptor in the catalytic mechanism. Asp129 serves as the catalytic Proton donor.

This sequence belongs to the HisA/HisF family.

The protein resides in the cytoplasm. The enzyme catalyses 1-(5-phospho-beta-D-ribosyl)-5-[(5-phospho-beta-D-ribosylamino)methylideneamino]imidazole-4-carboxamide = 5-[(5-phospho-1-deoxy-D-ribulos-1-ylimino)methylamino]-1-(5-phospho-beta-D-ribosyl)imidazole-4-carboxamide. The protein operates within amino-acid biosynthesis; L-histidine biosynthesis; L-histidine from 5-phospho-alpha-D-ribose 1-diphosphate: step 4/9. The protein is 1-(5-phosphoribosyl)-5-[(5-phosphoribosylamino)methylideneamino] imidazole-4-carboxamide isomerase of Legionella pneumophila (strain Lens).